A 1374-amino-acid polypeptide reads, in one-letter code: DNA-directed RNA polymerase subunit beta' (1374 aa).

Cys-71, Cys-73, Cys-86, and Cys-89 together coordinate Zn(2+). The Mg(2+) site is built by Asp-462, Asp-464, and Asp-466. Cys-810, Cys-884, Cys-891, and Cys-894 together coordinate Zn(2+).

Belongs to the RNA polymerase beta' chain family. As to quaternary structure, the RNAP catalytic core consists of 2 alpha, 1 beta, 1 beta' and 1 omega subunit. When a sigma factor is associated with the core the holoenzyme is formed, which can initiate transcription. Mg(2+) is required as a cofactor. Requires Zn(2+) as cofactor.

The catalysed reaction is RNA(n) + a ribonucleoside 5'-triphosphate = RNA(n+1) + diphosphate. In terms of biological role, DNA-dependent RNA polymerase catalyzes the transcription of DNA into RNA using the four ribonucleoside triphosphates as substrates. This chain is DNA-directed RNA polymerase subunit beta', found in Rickettsia massiliae (strain Mtu5).